A 563-amino-acid chain; its full sequence is Rhodopsin kinase GRK1 (563 aa).

The interval 1 to 15 is interaction with RCVRN; it reads MDFGSLETVVANSAF. An N-terminal region spans residues 1–189; sequence MDFGSLETVV…LEAQPMGEDW (189 aa). Serine 5 bears the Phosphoserine mark. At threonine 8 the chain carries Phosphothreonine. Position 21 is a phosphoserine; by PKA and autocatalysis (serine 21). The region spanning 58-175 is the RGS domain; that stretch reads FESVCLEQPI…LGSLYFLRFL (118 aa). The region spanning 190-455 is the Protein kinase domain; sequence FLDFRVLGKG…CDKLRAHPLF (266 aa). ATP contacts are provided by residues 196 to 204 and lysine 219; that span reads LGKGGFGEV. Aspartate 317 (proton acceptor) is an active-site residue. Positions 456–521 constitute an AGC-kinase C-terminal domain; the sequence is KDLNWRQLEA…GNCPIPWQEE (66 aa). Residues 456 to 563 are C-terminal; it reads KDLNWRQLEA…SSKSGMCLVS (108 aa). Serine 491 carries the phosphoserine; by autocatalysis modification. Threonine 492 carries the phosphothreonine; by autocatalysis modification. Residues 539 to 563 are disordered; sequence QMPDDMKGISGGSSSSSKSGMCLVS. Over residues 550 to 563 the composition is skewed to low complexity; it reads GSSSSSKSGMCLVS. The residue at position 560 (cysteine 560) is a Cysteine methyl ester. A lipid anchor (S-farnesyl cysteine) is attached at cysteine 560. A propeptide spans 561 to 563 (removed in mature form); that stretch reads LVS.

It belongs to the protein kinase superfamily. AGC Ser/Thr protein kinase family. GPRK subfamily. In terms of assembly, interacts (via N-terminus) with RCVRN (via C-terminus); the interaction is Ca(2+)-dependent. Interacts (when prenylated) with PDE6D; this promotes release from membranes. May form a complex composed of RHO, GRK1 and RCVRN in a Ca(2+)-dependent manner; RCVRN prevents the interaction between GRK1 and RHO. In terms of processing, autophosphorylated, Ser-21 is a minor site of autophosphorylation compared to Ser-491 and Thr-492. Phosphorylation at Ser-21 is regulated by light and activated by cAMP. Post-translationally, farnesylation is required for full activity. As to expression, retinal-specific. Expressed in rods and cones cells.

It is found in the membrane. It localises to the cell projection. The protein resides in the cilium. Its subcellular location is the photoreceptor outer segment. It catalyses the reaction L-threonyl-[rhodopsin] + ATP = O-phospho-L-threonyl-[rhodopsin] + ADP + H(+). It carries out the reaction L-seryl-[rhodopsin] + ATP = O-phospho-L-seryl-[rhodopsin] + ADP + H(+). With respect to regulation, inhibited by RCVRN, which prevents the interaction between GRK1 and RHO. Inhibition is calcium-dependent. Inhibited by phosphorylation of Ser-21. Retina-specific kinase involved in the signal turnoff via phosphorylation of rhodopsin (RHO), the G protein- coupled receptor that initiates the phototransduction cascade. This rapid desensitization is essential for scotopic vision and permits rapid adaptation to changes in illumination. May play a role in the maintenance of the outer nuclear layer in the retina. In Homo sapiens (Human), this protein is Rhodopsin kinase GRK1.